The sequence spans 212 residues: 3-isopropylmalate dehydratase small subunit (212 aa).

It belongs to the LeuD family. LeuD type 1 subfamily. Heterodimer of LeuC and LeuD.

It carries out the reaction (2R,3S)-3-isopropylmalate = (2S)-2-isopropylmalate. Its pathway is amino-acid biosynthesis; L-leucine biosynthesis; L-leucine from 3-methyl-2-oxobutanoate: step 2/4. In terms of biological role, catalyzes the isomerization between 2-isopropylmalate and 3-isopropylmalate, via the formation of 2-isopropylmaleate. The polypeptide is 3-isopropylmalate dehydratase small subunit (Pseudomonas aeruginosa (strain UCBPP-PA14)).